Here is a 292-residue protein sequence, read N- to C-terminus: Small ribosomal subunit biogenesis GTPase RsgA (292 aa).

The CP-type G domain occupies 64-221; that stretch reads RSELFRPAVA…LVDTPGFSSL (158 aa). GTP contacts are provided by residues 113–116 and 164–172; these read NKMD and GPSGVGKST. Residues C245, C250, H252, and C258 each coordinate Zn(2+).

Belongs to the TRAFAC class YlqF/YawG GTPase family. RsgA subfamily. In terms of assembly, monomer. Associates with 30S ribosomal subunit, binds 16S rRNA. Zn(2+) is required as a cofactor.

It is found in the cytoplasm. Its function is as follows. One of several proteins that assist in the late maturation steps of the functional core of the 30S ribosomal subunit. Helps release RbfA from mature subunits. May play a role in the assembly of ribosomal proteins into the subunit. Circularly permuted GTPase that catalyzes slow GTP hydrolysis, GTPase activity is stimulated by the 30S ribosomal subunit. The sequence is that of Small ribosomal subunit biogenesis GTPase RsgA from Clostridium botulinum (strain Loch Maree / Type A3).